A 196-amino-acid polypeptide reads, in one-letter code: MDVTIQHPWFKHALGPFYPSRLFDQFFGQGLFEYDLLPFLSSTISPYYRQTLLRTVLDSCISELMTHRWFVPHQPHAGNPENNPIKVRSDRDKFVIFLDVKHFSPEDLTVKVLEDFVEIHGKHNERQDDHGYISREFHRRYRLPSSVDQSALSCSLSADGMLTFSGPKVQSGLDAGHSERAIPVSQEEKPSSAPLF.

Position 1 is an N-acetylmethionine (Met1). The tract at residues 1–63 is required for complex formation with BFSP1 and BFSP2; it reads MDVTIQHPWF…RTVLDSCISE (63 aa). Gln6 carries the deamidated glutamine; partial modification. Phosphoserine is present on Ser45. Position 50 is a deamidated glutamine; partial (Gln50). Positions 76–185 constitute a sHSP domain; sequence HAGNPENNPI…GHSERAIPVS (110 aa). An N6-acetyllysine mark is found at Lys93 and Lys122. A Zn(2+)-binding site is contributed by His123. Asn124 is subject to Deamidated asparagine; partial. Zn(2+)-binding residues include Glu125 and His130. Ser145 bears the Phosphoserine mark. The residue at position 170 (Gln170) is a Deamidated glutamine; partial. Residues 170-196 form a disordered region; the sequence is QSGLDAGHSERAIPVSQEEKPSSAPLF. The span at 176–190 shows a compositional bias: basic and acidic residues; the sequence is GHSERAIPVSQEEKP. His177 provides a ligand contact to Zn(2+). O-linked (GlcNAc) serine glycosylation occurs at Ser185.

It belongs to the small heat shock protein (HSP20) family. In terms of assembly, heteromer composed of three CRYAA and one CRYAB subunits. Inter-subunit bridging via zinc ions enhances stability, which is crucial as there is no protein turn over in the lens. Can also form homodimers and homotetramers (dimers of dimers) which serve as the building blocks of homooligomers. Within homooligomers, the zinc-binding motif is created from residues of 3 different molecules. His-123 and Glu-125 from one molecule are ligands of the zinc ion, and His-130 and His-177 residues from additional molecules complete the site with tetrahedral coordination geometry. Part of a complex required for lens intermediate filament formation composed of BFSP1, BFSP2 and CRYAA. Post-translationally, acetylation at Lys-93 may increase chaperone activity. In terms of processing, undergoes age-dependent proteolytical cleavage at the C-terminus.

The protein localises to the cytoplasm. The protein resides in the nucleus. Its function is as follows. Contributes to the transparency and refractive index of the lens. Acts as a chaperone, preventing aggregation of various proteins under a wide range of stress conditions. Required for the correct formation of lens intermediate filaments as part of a complex composed of BFSP1, BFSP2 and CRYAA. This chain is Alpha-crystallin A chain (CRYAA), found in Spalax ehrenbergi (Middle East blind mole rat).